The primary structure comprises 498 residues: Protein spinster homolog 3 (498 aa).

The next 12 helical transmembrane spans lie at 49–71 (IAVA…IAGV), 87–107 (GLLQ…FGYL), 114–134 (KLIM…SSFV), 148–168 (LVGT…GDLF), 175–195 (LMIS…YIIG), 207–227 (WALR…VFLI), 260–280 (FVWS…LAFW), 309–329 (YIFG…GTCI), 343–363 (LICA…IVLA), 373–393 (FIAI…DILL), 407–427 (LQIM…IGAI), and 451–471 (LLCP…SLYI).

Belongs to the major facilitator superfamily. Spinster (TC 2.A.1.49) family.

Its subcellular location is the membrane. In terms of biological role, sphingolipid transporter. The polypeptide is Protein spinster homolog 3 (spns3) (Danio rerio (Zebrafish)).